Consider the following 69-residue polypeptide: Toxin Tma2 (69 aa).

Positions 2 to 66 constitute an LCN-type CS-alpha/beta domain; it reads KDDYPVDTAE…SPTKTSKRCN (65 aa). 4 cysteine pairs are disulfide-bonded: Cys14–Cys65, Cys18–Cys41, Cys27–Cys48, and Cys31–Cys50.

It belongs to the long (4 C-C) scorpion toxin superfamily. Sodium channel inhibitor family. As to expression, expressed by the venom gland.

The protein resides in the secreted. Functionally, inhibits voltage-gated sodium channels (Nav). This toxin shows insect lethality against crickets. The protein is Toxin Tma2 of Tityus macrochirus (Scorpion).